A 206-amino-acid polypeptide reads, in one-letter code: Thymidylate kinase (206 aa).

Position 10–17 (10–17 (GIDGAGKS)) interacts with ATP.

It belongs to the thymidylate kinase family.

The catalysed reaction is dTMP + ATP = dTDP + ADP. Functionally, phosphorylation of dTMP to form dTDP in both de novo and salvage pathways of dTTP synthesis. The polypeptide is Thymidylate kinase (Neisseria gonorrhoeae (strain ATCC 700825 / FA 1090)).